The following is a 153-amino-acid chain: NAD(P)H-quinone oxidoreductase subunit N (153 aa).

It belongs to the complex I NdhN subunit family. In terms of assembly, NDH-1 can be composed of about 15 different subunits; different subcomplexes with different compositions have been identified which probably have different functions.

It is found in the cellular thylakoid membrane. It carries out the reaction a plastoquinone + NADH + (n+1) H(+)(in) = a plastoquinol + NAD(+) + n H(+)(out). It catalyses the reaction a plastoquinone + NADPH + (n+1) H(+)(in) = a plastoquinol + NADP(+) + n H(+)(out). Its function is as follows. NDH-1 shuttles electrons from an unknown electron donor, via FMN and iron-sulfur (Fe-S) centers, to quinones in the respiratory and/or the photosynthetic chain. The immediate electron acceptor for the enzyme in this species is believed to be plastoquinone. Couples the redox reaction to proton translocation, and thus conserves the redox energy in a proton gradient. Cyanobacterial NDH-1 also plays a role in inorganic carbon-concentration. The sequence is that of NAD(P)H-quinone oxidoreductase subunit N from Synechococcus sp. (strain CC9605).